The chain runs to 1147 residues: Disease resistance protein RPP4 (1147 aa).

The 165-residue stretch at 11–175 (RRYDVFPSFS…KIANDVSNKL (165 aa)) folds into the TIR domain. Residue E86 is part of the active site. One can recognise an NB-ARC domain in the interval 189–446 (EDHIKAIKSI…CFFNGFKVSN (258 aa)). LRR repeat units follow at residues 548–573 (MRNL…LWSK), 584–606 (PLKL…TFKA), 608–629 (YLVN…TLPL), 630–653 (GSLK…SLAI), 655–676 (LEEL…IQNA), 698–721 (MCNL…IYLP), 722–743 (RKLK…NFKA), 744–766 (EYLV…TQPL), 767–790 (GSLK…SLAI), 792–813 (LERL…IQNA), 814–836 (TKLI…DLNL), 837–860 (ESLE…KMGC), 926–950 (LGSL…SKAT), 952–973 (LKRL…IGNL), 974–996 (HRLV…DVNL), 997–1017 (SSLI…PLIS), 1018–1042 (TRIE…DLTR), and 1044–1064 (SVLL…IFRL).

Interacts with RSH1.

The enzyme catalyses NAD(+) + H2O = ADP-D-ribose + nicotinamide + H(+). TIR-NB-LRR receptor-like protein that confers resistance to the pathogen Hyaloperonospora arabidopsis isolates Emoy2 and Emwa1 (downy mildew disease). Plays a role in the regulation of temperature response during plant growth and survival. The sequence is that of Disease resistance protein RPP4 from Arabidopsis thaliana (Mouse-ear cress).